Reading from the N-terminus, the 281-residue chain is 3'-5' exonuclease Snipper (281 aa).

The tract at residues 19-52 is disordered; sequence DGARPDPNNDPEESFNEDEVTEANSVPAKSKKSR. Positions 27–39 are enriched in acidic residues; the sequence is NDPEESFNEDEVT. Positions 64-262 constitute an Exonuclease domain; it reads YVIAVDFEAT…MCKMVRDGAL (199 aa). Mg(2+)-binding residues include Asp-69 and Glu-71. Glu-71 functions as the Proton acceptor in the catalytic mechanism. AMP is bound by residues Glu-71 and Ala-72. Asp-183 is a Mg(2+) binding site. His-240 functions as the Proton acceptor in the catalytic mechanism. Residue His-240 participates in AMP binding. Residue Asp-245 coordinates Mg(2+).

Belongs to the ERI2 family. Mg(2+) serves as cofactor.

It is found in the cytoplasm. Its subcellular location is the nucleus. The protein resides in the nucleolus. A broad-specificity exonuclease, capable of degrading both structure-specific DNA and RNA targets without sequence specificity in vitro. Requires two to five unpaired nucleotides in the 3' region for efficient binding and nuclease activity. Binds with higher affinity to RNA and DNA stem-loop substrates compared to single-stranded substrate. Binds to the 3'-end of histone mRNAs and degrades them, suggesting that it might play a role in histone mRNA decay after replication. Can readily cleave the histone stem-loop RNA beyond the -12 (UUU) position in the loop to produce -14 and then -16 oligonucleotide fragments for both the stem-loop and the reverse stem-loop. Cleaves both the single-stranded 3' flank as well as the double-stranded stem portion of histone stem-loop RNA. Might affect histone mRNA 3' processing thereby regulating histone protein expression. Has an important role in development and tissue formation. Might have a role in 5.8S rRNA precursor processing. This chain is 3'-5' exonuclease Snipper, found in Drosophila melanogaster (Fruit fly).